Consider the following 288-residue polypeptide: Bifunctional protein FolD (288 aa).

Residues 166 to 168 (GAS) and Ile-232 contribute to the NADP(+) site.

The protein belongs to the tetrahydrofolate dehydrogenase/cyclohydrolase family. In terms of assembly, homodimer.

The catalysed reaction is (6R)-5,10-methylene-5,6,7,8-tetrahydrofolate + NADP(+) = (6R)-5,10-methenyltetrahydrofolate + NADPH. The enzyme catalyses (6R)-5,10-methenyltetrahydrofolate + H2O = (6R)-10-formyltetrahydrofolate + H(+). Its pathway is one-carbon metabolism; tetrahydrofolate interconversion. In terms of biological role, catalyzes the oxidation of 5,10-methylenetetrahydrofolate to 5,10-methenyltetrahydrofolate and then the hydrolysis of 5,10-methenyltetrahydrofolate to 10-formyltetrahydrofolate. The polypeptide is Bifunctional protein FolD (Escherichia fergusonii (strain ATCC 35469 / DSM 13698 / CCUG 18766 / IAM 14443 / JCM 21226 / LMG 7866 / NBRC 102419 / NCTC 12128 / CDC 0568-73)).